The sequence spans 260 residues: MKIKLVSYSKDGERIVAIAAKMSRSRKGWDYHEKEMTDDEIETWIRDSITHGYWSVLEHSVYTFSIEGISRVASHQLVRHRIASYTQMSHRFAKPVDKYYKPITPPSIEKRGKEVVDKAYQDAYNYFYQLLEKGVPEEDARYVLPNGVNTNIVVTMNARELYNFFGLRLCSRAQWEIRAIAWKMLDEVKRVHPRLFKYAGPNCIIHENFIRENPITLDDIDNTVFISQRCIEGVTREGIPKCVKNARSILVSEDGVVMGK.

In terms of domain architecture, ThyX spans 1 to 202; it reads MKIKLVSYSK…PRLFKYAGPN (202 aa). FAD contacts are provided by residues serine 55, 79–81, and glutamine 87; that span reads RHR. Residues 76-79, 87-91, and arginine 141 each bind dUMP; these read QLVR and QMSHR. Residues 79–89 carry the ThyX motif motif; the sequence is RHRIASYTQMS. FAD-binding positions include 157-159 and asparagine 163; that span reads NAR. Arginine 168 serves as a coordination point for dUMP. Arginine 168 acts as the Involved in ionization of N3 of dUMP, leading to its activation in catalysis.

This sequence belongs to the thymidylate synthase ThyX family. In terms of assembly, homotetramer. FAD serves as cofactor.

The enzyme catalyses dUMP + (6R)-5,10-methylene-5,6,7,8-tetrahydrofolate + NADPH + H(+) = dTMP + (6S)-5,6,7,8-tetrahydrofolate + NADP(+). Its pathway is pyrimidine metabolism; dTTP biosynthesis. Functionally, catalyzes the reductive methylation of 2'-deoxyuridine-5'-monophosphate (dUMP) to 2'-deoxythymidine-5'-monophosphate (dTMP) while utilizing 5,10-methylenetetrahydrofolate (mTHF) as the methyl donor, and NADPH and FADH(2) as the reductant. The chain is Flavin-dependent thymidylate synthase from Sulfolobus acidocaldarius (strain ATCC 33909 / DSM 639 / JCM 8929 / NBRC 15157 / NCIMB 11770).